Here is a 565-residue protein sequence, read N- to C-terminus: Thiol:disulfide interchange protein DsbD (565 aa).

The N-terminal stretch at 1–19 (MAQRIFTLILLLCSTSVFA) is a signal peptide. Disulfide bonds link C122-C128 and C182-C304. 7 consecutive transmembrane segments (helical) span residues 163–183 (LPFS…TPCV), 208–228 (LLTF…GLVV), 243–263 (YVLI…FGLF), 296–316 (IAGL…LLYI), 323–343 (WLGG…LMLI), 365–385 (FGFV…GDIW), and 386–406 (GLRL…ITSL). The 132-residue stretch at 434–565 (WAFGATHTAQ…FSAHLRDRQP (132 aa)) folds into the Thioredoxin domain. An intrachain disulfide couples C480 to C483.

Belongs to the thioredoxin family. DsbD subfamily.

Its subcellular location is the cell inner membrane. The catalysed reaction is [protein]-dithiol + NAD(+) = [protein]-disulfide + NADH + H(+). The enzyme catalyses [protein]-dithiol + NADP(+) = [protein]-disulfide + NADPH + H(+). In terms of biological role, required to facilitate the formation of correct disulfide bonds in some periplasmic proteins and for the assembly of the periplasmic c-type cytochromes. Acts by transferring electrons from cytoplasmic thioredoxin to the periplasm. This transfer involves a cascade of disulfide bond formation and reduction steps. The sequence is that of Thiol:disulfide interchange protein DsbD from Shigella dysenteriae serotype 1 (strain Sd197).